We begin with the raw amino-acid sequence, 67 residues long: uncharacterized protein (67 aa).

2 consecutive transmembrane segments (helical) span residues 10–30 (EFFIYIFLFIDKTNVESITMW) and 40–60 (LMVGVWIVILFLTWFLLWMVF).

This sequence belongs to the plectrovirus ORF10 family.

The protein localises to the host membrane. This is an uncharacterized protein from Spiroplasma citri (SpV1).